The primary structure comprises 57 residues: Thiocillin GE37468 (57 aa).

A propeptide spans 1-42 (MGNNEEYFIDVNDLSIDVFDVVEQGGAVTALTADHGMPEVGA) (removed in mature form). The segment at residues 43 to 44 (ST) is a cross-link (5-methyloxazole-4-carboxylic acid (Ser-Thr)). A cross-link (pyridine-2,5-dicarboxylic acid (Ser-Cys) (with S-53)) is located at residues 43–52 (STNCFCYICC). Positions 43–53 (STNCFCYICCS) form a cross-link, pyridine-2,5-dicarboxylic acid (Ser-Ser) (with C-52). The segment at residues 45–46 (NC) is a cross-link (thiazole-4-carboxylic acid (Asn-Cys)). A cross-link (thiazoline-4-carboxylic acid (Phe-Cys)) is located at residues 47 to 48 (FC). The residue at position 50 (Ile50) is a 5-hydroxy-3-methylproline (Ile). Residues 50 to 51 (IC) constitute a cross-link (thiazole-4-carboxylic acid (Ile-Cys)). The segment at residues 51–52 (CC) is a cross-link (thiazole-4-carboxylic acid (Cys-Cys)). The segment at residues 53-54 (SC) is a cross-link (thiazole-4-carboxylic acid (Ser-Cys)). Residues Ser55 and Ser56 each carry the 2,3-didehydroalanine (Ser) modification. Position 57 (Asn57) is a propeptide, removed in mature form.

Post-translationally, maturation of thiazole and oxazole containing antibiotics involves the enzymatic condensation of a Cys, Ser or Thr with the alpha-carbonyl of the preceding amino acid to form a thioether or ether bond, then dehydration to form a double bond with the alpha-amino nitrogen. Thiazoline or oxazoline ring are dehydrogenated to form thiazole or oxazole rings. In terms of processing, maturation of pyridinyl containing antibiotics involves the cross-linking of a Ser and a Cys-Ser pair usually separated by 7 or 8 residues along the peptide chain. The Ser residues are dehydrated to didehydroalanines, then bonded between their beta carbons. The alpha carbonyl of the Cys condenses with alpha carbon of the first Ser to form a pyridinyl ring. The ring may be multiply dehydrogenated to form a pyridine ring with loss of the amino nitrogen of the first Ser.

The protein localises to the secreted. In terms of biological role, has bacteriocidal activity against both aerobic and anaerobic Gram-positive bacteria. Inhibits growth of B.subtilis (MIC=0.047 ug/ml) and methicillin-resistant S.aureus (MRSA) (MIC=0.047 ug/ml). Has poor activity against Gram-negative bacteria, with the exception of B.fragilis. Inhibits bacterial protein biosynthesis by acting on elongation factor Tu (EF-Tu). Full antibiotic activity depends on the presence of the modified residue Ile-50. The protein is Thiocillin GE37468 (getA) of Streptomyces sp.